Consider the following 564-residue polypeptide: NAC domain-containing protein 16 (564 aa).

An NAC domain is found at 16–166 (SAPGFRFHPT…YYALYKLYKK (151 aa)). The DNA-binding element occupies 115-172 (VGLKKTLVFYRGRAPNGERTDWVMHEYTMDEEELGRCKNAKEYYALYKLYKKSGAGPK). The chain crosses the membrane as a helical span at residues 535 to 555 (FLLLSIMGALCAIFWVFKATV).

As to expression, expressed in roots, rosette leaves, shoot apex, stems and flowers.

The protein localises to the membrane. Its subcellular location is the nucleus. In terms of biological role, transcriptional activator activated by proteolytic cleavage through regulated intramembrane proteolysis (RIP). Transcriptional activator that promotes leaf senescence by up-regulating senescence-associated genes in response to developmental and stress-induced senescence signals. Functions in salt and oxidative stress-responsive signaling pathways. Binds to the promoter of NAC029/NAP and NAC059/ORS1 genes. This Arabidopsis thaliana (Mouse-ear cress) protein is NAC domain-containing protein 16.